We begin with the raw amino-acid sequence, 1023 residues long: Hemolysin, chromosomal (1023 aa).

3 helical membrane-spanning segments follow: residues 237–259 (IGAGLDTVSGILSAISASFILSN), 267–326 (KAAA…LSIA), and 364–410 (DASL…GILE). Residues Lys-563 and Lys-689 are each lipidated (N6-myristoyl lysine). Hemolysin-type calcium-binding repeat units lie at residues 731–748 (FGSKFADIFHGADGDDHI), 749–766 (EGNDGNDRLYGDKGNDTL), 767–784 (SGGNGDDQLYGGDGNDKL), 785–802 (IGGAGNNYLNGGDGDDEL), 815–832 (SGGKGNDKLYGSEGADLL), and 833–850 (DGGEGNDLLKGGYGNDIY). A compositionally biased stretch (basic and acidic residues) spans 747 to 763 (HIEGNDGNDRLYGDKGN). Residues 747–780 (HIEGNDGNDRLYGDKGNDTLSGGNGDDQLYGGDG) are disordered.

Belongs to the RTX prokaryotic toxin (TC 1.C.11) family. Myristoylated by HlyC; the toxin only becomes active when modified. Mainly myristoylated, while a minor fraction is acylated with pentadecanoyl (C15:0; 26%) and heptadecanoyl (C17:0; 6%) fatty acyl groups. Fatty acylation is involved in binding to host membranes and promotes the irreversible insertion of Hemolysin into the host cell membrane. Can be activated by both myristoylation and palmitoylation, but HlyC catalyzes lysine myristoylation.

Its subcellular location is the secreted. The protein localises to the host cell membrane. Its function is as follows. Bacterial hemolysins are exotoxins that attack blood cell membranes and cause cell rupture by forming a pore. The sequence is that of Hemolysin, chromosomal from Escherichia coli.